Reading from the N-terminus, the 102-residue chain is Aspartyl/glutamyl-tRNA(Asn/Gln) amidotransferase subunit C (102 aa).

The protein belongs to the GatC family. Heterotrimer of A, B and C subunits.

The enzyme catalyses L-glutamyl-tRNA(Gln) + L-glutamine + ATP + H2O = L-glutaminyl-tRNA(Gln) + L-glutamate + ADP + phosphate + H(+). It carries out the reaction L-aspartyl-tRNA(Asn) + L-glutamine + ATP + H2O = L-asparaginyl-tRNA(Asn) + L-glutamate + ADP + phosphate + 2 H(+). In terms of biological role, allows the formation of correctly charged Asn-tRNA(Asn) or Gln-tRNA(Gln) through the transamidation of misacylated Asp-tRNA(Asn) or Glu-tRNA(Gln) in organisms which lack either or both of asparaginyl-tRNA or glutaminyl-tRNA synthetases. The reaction takes place in the presence of glutamine and ATP through an activated phospho-Asp-tRNA(Asn) or phospho-Glu-tRNA(Gln). The polypeptide is Aspartyl/glutamyl-tRNA(Asn/Gln) amidotransferase subunit C (Bordetella parapertussis (strain 12822 / ATCC BAA-587 / NCTC 13253)).